A 161-amino-acid chain; its full sequence is Ferredoxin/F(420)H(2)-dependent CoB-CoM heterodisulfide reductase subunit C (161 aa).

2 4Fe-4S ferredoxin-type domains span residues 10–40 and 51–82; these read KAEGLDLLSCMHCGICTGSCPSGRHTGLNTR and AAVLSDYDLWLCTTCYTCQERCPRGIPITDAI. Residues Cys-19, Cys-22, Cys-25, Cys-29, Cys-62, Cys-65, Cys-68, and Cys-72 each coordinate [4Fe-4S] cluster.

Belongs to the HdrC family. The ferredoxin/F(420)H(2)-dependent CoB-CoM heterodisulfide reductase is composed of three subunits; HdrA2, HdrB2 and HdrC2. [4Fe-4S] cluster serves as cofactor.

The protein resides in the cytoplasm. The enzyme catalyses coenzyme B + coenzyme M + 2 oxidized [2Fe-2S]-[ferredoxin] = coenzyme M-coenzyme B heterodisulfide + 2 reduced [2Fe-2S]-[ferredoxin] + 2 H(+). The catalysed reaction is coenzyme B + 2 oxidized coenzyme F420-(gamma-L-Glu)(n) + coenzyme M + 2 reduced [2Fe-2S]-[ferredoxin] + 4 H(+) = coenzyme M-coenzyme B heterodisulfide + 2 reduced coenzyme F420-(gamma-L-Glu)(n) + 2 oxidized [2Fe-2S]-[ferredoxin]. Its pathway is cofactor metabolism; coenzyme M-coenzyme B heterodisulfide reduction; coenzyme B and coenzyme M from coenzyme M-coenzyme B heterodisulfide: step 1/1. Its function is as follows. Part of a complex that catalyzes the reversible reduction of CoM-S-S-CoB to the thiol-coenzymes H-S-CoM (coenzyme M) and H-S-CoB (coenzyme B). Catalyzes the transfer of electrons from ferredoxin to CoM-S-S-CoB during methanogenesis from acetate. Electrons transfer from ferredoxin to CoM-S-S-CoB via HdrA2, HdrC2 and HdrB2. In addition, the complex can use electron bifurcation to direct electron pairs from reduced coenzyme F420 towards the reduction of both ferredoxin and CoB-CoM heterodisulfide. This activity may take place during Fe(III)-dependent anaerobic methane oxidation. This is Ferredoxin/F(420)H(2)-dependent CoB-CoM heterodisulfide reductase subunit C from Methanosarcina acetivorans (strain ATCC 35395 / DSM 2834 / JCM 12185 / C2A).